A 134-amino-acid chain; its full sequence is Large-conductance mechanosensitive channel (134 aa).

Helical transmembrane passes span 16–36 (VIDL…VTAL) and 81–101 (GDFI…FIIV).

The protein belongs to the MscL family. As to quaternary structure, homopentamer.

It is found in the cell inner membrane. Functionally, channel that opens in response to stretch forces in the membrane lipid bilayer. May participate in the regulation of osmotic pressure changes within the cell. This is Large-conductance mechanosensitive channel from Xylella fastidiosa (strain Temecula1 / ATCC 700964).